The following is a 90-amino-acid chain: Small ribosomal subunit protein bS16 (90 aa).

Belongs to the bacterial ribosomal protein bS16 family.

The sequence is that of Small ribosomal subunit protein bS16 from Lactococcus lactis subsp. lactis (strain IL1403) (Streptococcus lactis).